We begin with the raw amino-acid sequence, 315 residues long: Methionyl-tRNA formyltransferase (315 aa).

(6S)-5,6,7,8-tetrahydrofolate is bound at residue 113–116 (SLLP).

Belongs to the Fmt family.

The enzyme catalyses L-methionyl-tRNA(fMet) + (6R)-10-formyltetrahydrofolate = N-formyl-L-methionyl-tRNA(fMet) + (6S)-5,6,7,8-tetrahydrofolate + H(+). Attaches a formyl group to the free amino group of methionyl-tRNA(fMet). The formyl group appears to play a dual role in the initiator identity of N-formylmethionyl-tRNA by promoting its recognition by IF2 and preventing the misappropriation of this tRNA by the elongation apparatus. This Yersinia pseudotuberculosis serotype O:1b (strain IP 31758) protein is Methionyl-tRNA formyltransferase.